We begin with the raw amino-acid sequence, 364 residues long: Uroporphyrinogen decarboxylase (364 aa).

Substrate-binding positions include 28–32 (RQAGR), Asp78, Tyr160, Thr215, and His333.

It belongs to the uroporphyrinogen decarboxylase family. In terms of assembly, homodimer.

It localises to the cytoplasm. The catalysed reaction is uroporphyrinogen III + 4 H(+) = coproporphyrinogen III + 4 CO2. It participates in porphyrin-containing compound metabolism; protoporphyrin-IX biosynthesis; coproporphyrinogen-III from 5-aminolevulinate: step 4/4. In terms of biological role, catalyzes the decarboxylation of four acetate groups of uroporphyrinogen-III to yield coproporphyrinogen-III. The sequence is that of Uroporphyrinogen decarboxylase from Burkholderia thailandensis (strain ATCC 700388 / DSM 13276 / CCUG 48851 / CIP 106301 / E264).